Reading from the N-terminus, the 828-residue chain is MKLSRRSFMKANAVAAAAAAAGLSVPGVARAVVGQQEAIKWDKAPCRFCGTGCGVLVGTQQGRVVACQGDPDAPVNRGLNCIKGYFLPKIMYGKDRLTQPMLRMKDGSYHKDGEFTPVSWEQAFDVMEEKFKTSLKEKGPEAIGMFGSGQWTIWEGYAAAKLFKAGFRSNNIDPNARHCMASAVVGFMRTFGMDEPMGCYDDIEQADAFVLWGSNMAEMHPILWSRITNRRLSDPNVKVAVLSTFQHRSFELADNGIVFTPQSDLVILNYIANYIIQNNAVNQDFFTKHVNLRKGATDIGYGLRPTHPLEKAAKNPGSDASEPMSFDEYKAFVAEYTLDKTAEMTGVPKDQLEQLAQLYADPNKRVISYWTMGFNQHTRGVWANNLVYNLHLLTGKISQPGCGPFSLTGQPSACGTAREVGTFSHRLPADMVVTNEKHRDICEKHWQIPAGTIPAKVGLHAVAQDRALKDGKLNVYWVMCNNNMQAGPNINEDRMPGWRDPRNFIIVSDPYPTVSALSADLILPTAMWVEKEGAYGNAERRTQFWRQQIKAPGEAKSDLWQLVQFSRRFKTEEVWPEALLAQKPELRGKTLYDVLFATPAVSKFPLSELKEDQLNDESRELGFYLQKGLFEEYAWFGRGHGHDLAPFDDYHNARGLRWPVVEGKETQWRYSEGNDPYVKAGEGYKFYGKPDGKAVIFALPFEPAAESPDNEYDLWLSTGRVLEHWHTGSMTRRVPELHRAFPEAVVFIHPLDAKARDLRRGDKVKVSSRRGEVISIVETRGRNRPPQGLVYMPFFDAAQLVNNLTLDATDPLSKETDFKKCAVKLAKV.

Positions 1-31 form a signal peptide, tat-type signal; sequence MKLSRRSFMKANAVAAAAAAAGLSVPGVARA. Positions 39–95 constitute a 4Fe-4S Mo/W bis-MGD-type domain; that stretch reads IKWDKAPCRFCGTGCGVLVGTQQGRVVACQGDPDAPVNRGLNCIKGYFLPKIMYGKD. Residues Cys46, Cys49, Cys53, and Cys81 each coordinate [4Fe-4S] cluster. Residues Lys83, Gln150, Asn175, Cys179, 212 to 219, 243 to 247, 262 to 264, Met372, Gln376, Asn482, 508 to 509, Lys531, Asp558, and 718 to 727 contribute to the Mo-bis(molybdopterin guanine dinucleotide) site; these read WGSNMAEM, STFQH, QSD, SD, and TGRVLEHWHT. A substrate-binding site is contributed by Phe794. Mo-bis(molybdopterin guanine dinucleotide) contacts are provided by Asn802 and Lys819.

The protein belongs to the prokaryotic molybdopterin-containing oxidoreductase family. NasA/NapA/NarB subfamily. In terms of assembly, component of the periplasmic nitrate reductase NapAB complex composed of NapA and NapB. [4Fe-4S] cluster serves as cofactor. The cofactor is Mo-bis(molybdopterin guanine dinucleotide). In terms of processing, predicted to be exported by the Tat system. The position of the signal peptide cleavage has not been experimentally proven.

It localises to the periplasm. It carries out the reaction 2 Fe(II)-[cytochrome] + nitrate + 2 H(+) = 2 Fe(III)-[cytochrome] + nitrite + H2O. Catalytic subunit of the periplasmic nitrate reductase complex NapAB. Receives electrons from NapB and catalyzes the reduction of nitrate to nitrite. The protein is Periplasmic nitrate reductase of Salmonella agona (strain SL483).